Here is a 516-residue protein sequence, read N- to C-terminus: Probable 2-isopropylmalate synthase (516 aa).

Residues 20 to 271 (VTVFDTTLRD…KTNIRTEYLV (252 aa)) enclose the Pyruvate carboxyltransferase domain.

It belongs to the alpha-IPM synthase/homocitrate synthase family.

It catalyses the reaction 3-methyl-2-oxobutanoate + acetyl-CoA + H2O = (2S)-2-isopropylmalate + CoA + H(+). Its pathway is amino-acid biosynthesis; L-leucine biosynthesis; L-leucine from 3-methyl-2-oxobutanoate: step 1/4. Functionally, catalyzes the condensation of the acetyl group of acetyl-CoA with 3-methyl-2-oxobutanoate (2-oxoisovalerate) to form 3-carboxy-3-hydroxy-4-methylpentanoate (2-isopropylmalate). The polypeptide is Probable 2-isopropylmalate synthase (leuA) (Methanosarcina mazei (strain ATCC BAA-159 / DSM 3647 / Goe1 / Go1 / JCM 11833 / OCM 88) (Methanosarcina frisia)).